The sequence spans 622 residues: Chaperone protein HscA homolog (622 aa).

The protein belongs to the heat shock protein 70 family.

Chaperone involved in the maturation of iron-sulfur cluster-containing proteins. Has a low intrinsic ATPase activity which is markedly stimulated by HscB. The protein is Chaperone protein HscA homolog of Methylobacillus flagellatus (strain ATCC 51484 / DSM 6875 / VKM B-1610 / KT).